We begin with the raw amino-acid sequence, 196 residues long: Vascular-related unknown protein 2 (196 aa).

The disordered stretch occupies residues 84-130; sequence ANNINTNPKKRRIIHQHKEEEEEELQKGEEEEEDEEDTASSPSNKTK. Residues 103-121 are compositionally biased toward acidic residues; that stretch reads EEEEELQKGEEEEEDEEDT.

Involved in the regulation of plant growth. In Arabidopsis thaliana (Mouse-ear cress), this protein is Vascular-related unknown protein 2.